A 556-amino-acid polypeptide reads, in one-letter code: Innexin-7 (556 aa).

The next 3 helical transmembrane spans lie at 21–41 (LVAS…AVLI), 127–147 (FFLL…KYFA), and 213–233 (AYYV…NVIL). Asn-267 carries an N-linked (GlcNAc...) asparagine glycan. The helical transmembrane segment at 310-330 (IFVFLWAWYILLTAFTVGNLF) threads the bilayer. Residues 431 to 556 (DESQVESGKN…IPKTAEKKHW (126 aa)) form a disordered region. A compositionally biased stretch (polar residues) spans 435-447 (VESGKNTAPSTSH). Positions 452-461 (RGTEQLEKNV) are enriched in basic and acidic residues. Residues 463-474 (SRQGSLSTQLRP) show a composition bias toward polar residues. Basic residues predominate over residues 500 to 513 (KGSKKPSPTKKKAS). Residues 514–527 (SKNSPQSSSNSRRP) show a composition bias toward low complexity. Residues 539-556 (HHHEPDSKIPKTAEKKHW) are compositionally biased toward basic and acidic residues.

It belongs to the pannexin family.

Its subcellular location is the cell membrane. The protein resides in the cell junction. It localises to the gap junction. Structural component of the gap junctions. This is Innexin-7 (inx-7) from Caenorhabditis elegans.